Reading from the N-terminus, the 59-residue chain is Insertion element IS986 uncharacterized 6.6 kDa protein (59 aa).

Residues 1–26 are disordered; the sequence is MRKWVRQAQVDAGARPGTTTEESAEI.

This sequence belongs to the transposase 8 family.

The polypeptide is Insertion element IS986 uncharacterized 6.6 kDa protein (Mycobacterium tuberculosis).